Consider the following 339-residue polypeptide: Diguanylate cyclase VdcA (339 aa).

The GGDEF domain maps to 206–339 (QQVSLIMLDI…NLGRNRVMPL (134 aa)). D214 serves as a coordination point for Mg(2+). Substrate contacts are provided by N222 and D231. E257 lines the Mg(2+) pocket. Residue E257 is the Proton acceptor of the active site.

Mg(2+) is required as a cofactor.

The enzyme catalyses 2 GTP = 3',3'-c-di-GMP + 2 diphosphate. Its pathway is purine metabolism; 3',5'-cyclic di-GMP biosynthesis. Functionally, diguanylate cyclase (DGC) that catalyzes the synthesis of cyclic diguanylate (c-di-GMP) via the condensation of 2 GTP molecules. Is involved in the modulation of intracellular c-di-GMP levels. Cyclic-di-GMP is a second messenger which positively regulates biofilm formation and negatively regulates virulence in V.cholerae, and is proposed to play an important role in the transition from persistence in the environment to survival in the host. Overexpression of vdcA results in increased biofilm formation, and reduced motility and virulence. In Vibrio cholerae serotype O1 (strain ATCC 39315 / El Tor Inaba N16961), this protein is Diguanylate cyclase VdcA (vdcA).